A 21-amino-acid polypeptide reads, in one-letter code: C-phycocyanin alpha subunit (21 aa).

Belongs to the phycobiliprotein family. As to quaternary structure, heterodimer of an alpha and a beta subunit, which further assembles into trimers and the trimers into hexamers. Post-translationally, contains one covalently linked bilin chromophore.

The protein resides in the cellular thylakoid membrane. Light-harvesting photosynthetic bile pigment-protein from the phycobiliprotein complex (phycobilisome, PBS). Phycocyanin is the major phycobiliprotein in the PBS rod. This chain is C-phycocyanin alpha subunit, found in Anabaena sp. (strain L31).